The following is a 395-amino-acid chain: Succinyl-diaminopimelate desuccinylase (395 aa).

H74 contributes to the Zn(2+) binding site. D76 is an active-site residue. D107 lines the Zn(2+) pocket. The active-site Proton acceptor is E141. Positions 142, 170, and 368 each coordinate Zn(2+).

The protein belongs to the peptidase M20A family. DapE subfamily. As to quaternary structure, homodimer. The cofactor is Zn(2+). Co(2+) is required as a cofactor.

It carries out the reaction N-succinyl-(2S,6S)-2,6-diaminopimelate + H2O = (2S,6S)-2,6-diaminopimelate + succinate. It functions in the pathway amino-acid biosynthesis; L-lysine biosynthesis via DAP pathway; LL-2,6-diaminopimelate from (S)-tetrahydrodipicolinate (succinylase route): step 3/3. In terms of biological role, catalyzes the hydrolysis of N-succinyl-L,L-diaminopimelic acid (SDAP), forming succinate and LL-2,6-diaminopimelate (DAP), an intermediate involved in the bacterial biosynthesis of lysine and meso-diaminopimelic acid, an essential component of bacterial cell walls. The sequence is that of Succinyl-diaminopimelate desuccinylase from Brucella abortus (strain S19).